Here is a 469-residue protein sequence, read N- to C-terminus: ATP synthase subunit beta (469 aa).

155–162 lines the ATP pocket; that stretch reads GGAGCGKT.

Belongs to the ATPase alpha/beta chains family. As to quaternary structure, F-type ATPases have 2 components, CF(1) - the catalytic core - and CF(0) - the membrane proton channel. CF(1) has five subunits: alpha(3), beta(3), gamma(1), delta(1), epsilon(1). CF(0) has three main subunits: a(1), b(2) and c(9-12). The alpha and beta chains form an alternating ring which encloses part of the gamma chain. CF(1) is attached to CF(0) by a central stalk formed by the gamma and epsilon chains, while a peripheral stalk is formed by the delta and b chains.

It is found in the cell inner membrane. It carries out the reaction ATP + H2O + 4 H(+)(in) = ADP + phosphate + 5 H(+)(out). In terms of biological role, produces ATP from ADP in the presence of a proton gradient across the membrane. The catalytic sites are hosted primarily by the beta subunits. The sequence is that of ATP synthase subunit beta from Syntrophus aciditrophicus (strain SB).